Here is a 148-residue protein sequence, read N- to C-terminus: Sec-independent protein translocase protein TatB (148 aa).

Residues M1–G21 traverse the membrane as a helical segment.

The protein belongs to the TatB family. In terms of assembly, the Tat system comprises two distinct complexes: a TatABC complex, containing multiple copies of TatA, TatB and TatC subunits, and a separate TatA complex, containing only TatA subunits. Substrates initially bind to the TatABC complex, which probably triggers association of the separate TatA complex to form the active translocon.

Its subcellular location is the cell inner membrane. Part of the twin-arginine translocation (Tat) system that transports large folded proteins containing a characteristic twin-arginine motif in their signal peptide across membranes. Together with TatC, TatB is part of a receptor directly interacting with Tat signal peptides. TatB may form an oligomeric binding site that transiently accommodates folded Tat precursor proteins before their translocation. This chain is Sec-independent protein translocase protein TatB, found in Aeromonas salmonicida (strain A449).